The sequence spans 326 residues: Protein ORF5 in retron Ec67 (326 aa).

Positions 1-24 (MGKSKKNRAAATNQLKHKSQTSAE) are disordered. Polar residues predominate over residues 10–24 (AATNQLKHKSQTSAE).

Belongs to the phage portal family. PBSX subfamily.

This chain is Protein ORF5 in retron Ec67, found in Escherichia coli.